The sequence spans 1159 residues: Reverse gyrase 2 (1159 aa).

Residues 1 to 40 form an RG N-terminal-type zinc finger; it reads MALELIERGCPNCGGVISSDRLEKGLPCSKCLPKPTEEKV. Positions 10, 13, 28, and 31 each coordinate Zn(2+). Residues Gln82 and 99 to 106 each bind ATP; that span reads APTGVGKT. A Helicase ATP-binding domain is found at 86–275; it reads AKRVFMNQSF…LFRNLLGFDV (190 aa). Positions 196–199 match the DEAD box motif; sequence DDID. The tract at residues 583–1159 is topoisomerase I; sequence DLFKTTLVIV…LLKEEKAFKK (577 aa). Residues 587–743 enclose the Toprim domain; sequence TTLVIVESPN…NIKRAEFHEV (157 aa). Glu593 and Asp712 together coordinate Mg(2+). Residues 759–1152 form the Topo IA-type catalytic domain; that stretch reads DLNLVKAQLV…EVHRIKVLLK (394 aa). Catalysis depends on Tyr902, which acts as the O-(5'-phospho-DNA)-tyrosine intermediate.

This sequence in the N-terminal section; belongs to the DEAD box helicase family. DDVD subfamily. It in the C-terminal section; belongs to the type IA topoisomerase family. In terms of assembly, monomer. Zn(2+) serves as cofactor. The cofactor is Mg(2+).

It is found in the cytoplasm. It carries out the reaction ATP + H2O = ADP + phosphate + H(+). Its function is as follows. Modifies the topological state of DNA by introducing positive supercoils in an ATP-dependent process, increasing the linking number in steps of +1. Binds to single-stranded DNA, transiently cleaves and then rejoins the ends, introducing a positive supercoil in the process. The scissile phosphodiester is attacked by the catalytic tyrosine of the enzyme, resulting in the formation of a DNA-(5'-phosphotyrosyl)-enzyme intermediate. Probably involved in rewinding DNA strands in regions of the chromosome that have opened up to allow replication, transcription, DNA repair and/or for DNA protection. The sequence is that of Reverse gyrase 2 from Aquifex aeolicus (strain VF5).